The primary structure comprises 85 residues: uncharacterized protein (85 aa).

The first 20 residues, 1-20, serve as a signal peptide directing secretion; sequence MIKLFCVLAAFISINSACQS.

This is an uncharacterized protein from Invertebrate iridescent virus 6 (IIV-6).